The primary structure comprises 538 residues: Phosphoenolpyruvate carboxykinase (ATP) (538 aa).

Substrate is bound by residues Arg-64, Tyr-205, and Lys-211. Residues Lys-211, His-230, and 246-254 each bind ATP; that span reads GLSGTGKTT. Mn(2+) is bound by residues Lys-211 and His-230. Mn(2+) is bound at residue Asp-267. ATP-binding positions include Glu-295, Arg-331, 447–448, and Thr-453; that span reads RI. Arg-331 contributes to the substrate binding site.

The protein belongs to the phosphoenolpyruvate carboxykinase (ATP) family. In terms of assembly, monomer. The cofactor is Mn(2+).

The protein localises to the cytoplasm. The enzyme catalyses oxaloacetate + ATP = phosphoenolpyruvate + ADP + CO2. The protein operates within carbohydrate biosynthesis; gluconeogenesis. Functionally, involved in the gluconeogenesis. Catalyzes the conversion of oxaloacetate (OAA) to phosphoenolpyruvate (PEP) through direct phosphoryl transfer between the nucleoside triphosphate and OAA. The sequence is that of Phosphoenolpyruvate carboxykinase (ATP) from Haemophilus influenzae (strain 86-028NP).